The following is a 321-amino-acid chain: Translation initiation factor eIF2B subunit alpha (321 aa).

Belongs to the eIF-2B alpha/beta/delta subunits family. In terms of assembly, component of the translation initiation factor 2B (eIF2B) complex which is a heterodecamer of two sets of five different subunits: alpha, beta, gamma, delta and epsilon. Subunits alpha, beta and delta comprise a regulatory subcomplex and subunits epsilon and gamma comprise a catalytic subcomplex. Within the complex, the hexameric regulatory complex resides at the center, with the two heterodimeric catalytic subcomplexes bound on opposite sides.

The protein resides in the cytoplasm. It is found in the cytosol. Functionally, acts as a component of the translation initiation factor 2B (eIF2B) complex, which catalyzes the exchange of GDP for GTP on eukaryotic initiation factor 2 (eIF2) gamma subunit. Its guanine nucleotide exchange factor activity is repressed when bound to eIF2 complex phosphorylated on the alpha subunit, thereby limiting the amount of methionyl-initiator methionine tRNA available to the ribosome and consequently global translation is repressed. The chain is Translation initiation factor eIF2B subunit alpha (eif2b1) from Dictyostelium discoideum (Social amoeba).